We begin with the raw amino-acid sequence, 125 residues long: MPTIQQLIRSERSKLKKKTKSPALKQCPQRRGVCTRVYTTTPKKPNSALRKVARVRLTSGFEVTAYIPGIGHNLQEHSVVLIRGGRVKDLPGVRYHIIRGTLDAQGVKDRKQGRSKYGTKRPKKA.

A disordered region spans residues 9 to 28; it reads RSERSKLKKKTKSPALKQCP. The residue at position 89 (Asp89) is a 3-methylthioaspartic acid. The interval 104-125 is disordered; the sequence is AQGVKDRKQGRSKYGTKRPKKA. Basic residues predominate over residues 113-125; the sequence is GRSKYGTKRPKKA.

Belongs to the universal ribosomal protein uS12 family. As to quaternary structure, part of the 30S ribosomal subunit. Contacts proteins S8 and S17. May interact with IF1 in the 30S initiation complex.

In terms of biological role, with S4 and S5 plays an important role in translational accuracy. Functionally, interacts with and stabilizes bases of the 16S rRNA that are involved in tRNA selection in the A site and with the mRNA backbone. Located at the interface of the 30S and 50S subunits, it traverses the body of the 30S subunit contacting proteins on the other side and probably holding the rRNA structure together. The combined cluster of proteins S8, S12 and S17 appears to hold together the shoulder and platform of the 30S subunit. This chain is Small ribosomal subunit protein uS12, found in Rippkaea orientalis (strain PCC 8801 / RF-1) (Cyanothece sp. (strain PCC 8801)).